Here is a 201-residue protein sequence, read N- to C-terminus: Translation machinery-associated protein 22 (201 aa).

In terms of domain architecture, SUI1 spans 94–165 (VTIKRIERNK…EARAYIEKLL (72 aa)).

It belongs to the DENR family. As to quaternary structure, interacts with the 40S ribosomal subunit.

The protein localises to the cytoplasm. The polypeptide is Translation machinery-associated protein 22 (TMA22) (Meyerozyma guilliermondii (strain ATCC 6260 / CBS 566 / DSM 6381 / JCM 1539 / NBRC 10279 / NRRL Y-324) (Yeast)).